A 370-amino-acid chain; its full sequence is Versatile peroxidase VPS1 (370 aa).

An N-terminal signal peptide occupies residues 1–20 (MAFAKLSAFVLALGATVALG). The propeptide occupies 21–31 (ESPTHRCLNKR). Cystine bridges form between Cys-34-Cys-46, Cys-45-Cys-315, Cys-65-Cys-151, and Cys-279-Cys-344. Mn(2+) is bound by residues Glu-67 and Glu-71. Catalysis depends on His-78, which acts as the Proton acceptor. Ca(2+) is bound by residues Asp-79, Gly-97, Asp-99, and Ser-101. N-linked (GlcNAc...) asparagine glycosylation occurs at Asn-133. The active-site Tryptophan radical intermediate is Trp-201. His-206 contacts heme b. Thr-207 is a Ca(2+) binding site. Residue 210 to 214 (AADHV) coordinates heme b. Asp-212 contacts Mn(2+). Ca(2+) contacts are provided by Asp-224, Thr-226, Thr-229, and Asp-231.

It belongs to the peroxidase family. Ligninase subfamily. It depends on heme b as a cofactor. Ca(2+) serves as cofactor.

The protein localises to the secreted. The enzyme catalyses 1-(4-hydroxy-3-methoxyphenyl)-2-(2-methoxyphenoxy)propane-1,3-diol + H2O2 = guaiacol + vanillin + glycolaldehyde + H2O. It catalyses the reaction 2 Mn(2+) + H2O2 + 2 H(+) = 2 Mn(3+) + 2 H2O. A versatile ligninolytic peroxidase that combines the substrate specificity characteristics of the two other ligninolytic peroxidases, manganese peroxidase and lignin peroxidase. The sequence is that of Versatile peroxidase VPS1 (vps1) from Pleurotus eryngii (Boletus of the steppes).